The following is a 711-amino-acid chain: DNA ligase (711 aa).

The tract at residues 1 to 21 is disordered; it reads MNATHRGAQADASAPAGGLPP. A compositionally biased stretch (low complexity) spans 10 to 21; sequence ADASAPAGGLPP. Residues 52 to 56, 101 to 102, and glutamate 146 each bind NAD(+); these read DAEYD and SL. Lysine 148 functions as the N6-AMP-lysine intermediate in the catalytic mechanism. Residues arginine 169, glutamate 205, lysine 322, and lysine 346 each coordinate NAD(+). Residues cysteine 440, cysteine 443, cysteine 458, and cysteine 464 each contribute to the Zn(2+) site. The region spanning 623-711 is the BRCT domain; the sequence is RAPAPLAGKT…VGAGQPGEQS (89 aa).

The protein belongs to the NAD-dependent DNA ligase family. LigA subfamily. Mg(2+) serves as cofactor. The cofactor is Mn(2+).

The enzyme catalyses NAD(+) + (deoxyribonucleotide)n-3'-hydroxyl + 5'-phospho-(deoxyribonucleotide)m = (deoxyribonucleotide)n+m + AMP + beta-nicotinamide D-nucleotide.. Its function is as follows. DNA ligase that catalyzes the formation of phosphodiester linkages between 5'-phosphoryl and 3'-hydroxyl groups in double-stranded DNA using NAD as a coenzyme and as the energy source for the reaction. It is essential for DNA replication and repair of damaged DNA. The polypeptide is DNA ligase (Cupriavidus pinatubonensis (strain JMP 134 / LMG 1197) (Cupriavidus necator (strain JMP 134))).